Here is a 271-residue protein sequence, read N- to C-terminus: Urease accessory protein UreD (271 aa).

The protein belongs to the UreD family. As to quaternary structure, ureD, UreF and UreG form a complex that acts as a GTP-hydrolysis-dependent molecular chaperone, activating the urease apoprotein by helping to assemble the nickel containing metallocenter of UreC. The UreE protein probably delivers the nickel.

The protein localises to the cytoplasm. Functionally, required for maturation of urease via the functional incorporation of the urease nickel metallocenter. The sequence is that of Urease accessory protein UreD from Bacillus sp. (strain TB-90).